A 319-amino-acid chain; its full sequence is Aliphatic sulfonates import ATP-binding protein SsuB 1 (319 aa).

An ABC transporter domain is found at 63 to 282 (VTLSGVSKRF…ARASAAFAAL (220 aa)). 95-102 (GRSGCGKS) contacts ATP.

The protein belongs to the ABC transporter superfamily. Aliphatic sulfonates importer (TC 3.A.1.17.2) family. The complex is composed of two ATP-binding proteins (SsuB), two transmembrane proteins (SsuC) and a solute-binding protein (SsuA).

The protein localises to the cell inner membrane. The catalysed reaction is ATP + H2O + aliphatic sulfonate-[sulfonate-binding protein]Side 1 = ADP + phosphate + aliphatic sulfonateSide 2 + [sulfonate-binding protein]Side 1.. Functionally, part of the ABC transporter complex SsuABC involved in aliphatic sulfonates import. Responsible for energy coupling to the transport system. In Burkholderia cenocepacia (strain HI2424), this protein is Aliphatic sulfonates import ATP-binding protein SsuB 1.